The chain runs to 360 residues: Peptide chain release factor 1 (360 aa).

Position 237 is an N5-methylglutamine (Q237).

Belongs to the prokaryotic/mitochondrial release factor family. In terms of processing, methylated by PrmC. Methylation increases the termination efficiency of RF1.

The protein localises to the cytoplasm. Its function is as follows. Peptide chain release factor 1 directs the termination of translation in response to the peptide chain termination codons UAG and UAA. This is Peptide chain release factor 1 from Nitrosococcus oceani (strain ATCC 19707 / BCRC 17464 / JCM 30415 / NCIMB 11848 / C-107).